A 359-amino-acid chain; its full sequence is UDP-3-O-acylglucosamine N-acyltransferase (359 aa).

Catalysis depends on His253, which acts as the Proton acceptor.

It belongs to the transferase hexapeptide repeat family. LpxD subfamily. In terms of assembly, homotrimer.

The enzyme catalyses a UDP-3-O-[(3R)-3-hydroxyacyl]-alpha-D-glucosamine + a (3R)-hydroxyacyl-[ACP] = a UDP-2-N,3-O-bis[(3R)-3-hydroxyacyl]-alpha-D-glucosamine + holo-[ACP] + H(+). It participates in bacterial outer membrane biogenesis; LPS lipid A biosynthesis. Its function is as follows. Catalyzes the N-acylation of UDP-3-O-acylglucosamine using 3-hydroxyacyl-ACP as the acyl donor. Is involved in the biosynthesis of lipid A, a phosphorylated glycolipid that anchors the lipopolysaccharide to the outer membrane of the cell. This Burkholderia lata (strain ATCC 17760 / DSM 23089 / LMG 22485 / NCIMB 9086 / R18194 / 383) protein is UDP-3-O-acylglucosamine N-acyltransferase.